Reading from the N-terminus, the 159-residue chain is Large ribosomal subunit protein eL24 (159 aa).

Residues 118–159 (ANKAVRAAKAAANKEKKASQPKTQQKTAKNVKTAAPRVGGKR) form a disordered region. The segment covering 137 to 147 (QPKTQQKTAKN) has biased composition (polar residues).

It belongs to the eukaryotic ribosomal protein eL24 family.

The protein is Large ribosomal subunit protein eL24 of Caenorhabditis elegans.